We begin with the raw amino-acid sequence, 764 residues long: MSTSCLNLIKKLSLAIEETNDEIINNMTQNGIKYDWLCIKNNVTYDFYYKSLKNRLQLVVEEYLMSSSKQMNFDSLSLSEIEPKQFELQFDVSQNINNFIRLIHSQDNNNFIDVFVHLLSKYKAKYGESLFPNEPIKTIDFIKNFYGKFNSELNSLNCTDCSSLKQTMCTCIIEKICGLYGLSINVSDQVNGIIPEDLHSVKILFTEIIKHYYENLHPIIWAQIILGILKDIFIELPTNREEFIKFIISRIIMNSGPLIFKIIQFIKPMLSVEIAKKYDLTRLSYPMLPEKSVEIIMKKIIINPETIDIIENYSASVGHVCKVIKLDDAENPFIIKIIKPLAVTQSCWEYKILHNLFPKNTCEHDFINAMLESNGREFNILNEVSNTNKGHDLYTDNYRNVFGLDINAVITTPKNISGVIKHDCWFAFAMELAPGISLQKLIDNNSFQTDTEYRAKLHRCLDLLVYKFFYNIVKNGFFHNDLHAGNIFFSHQLSQLTLIDFGSVSEINIFSSNTDSKSVLEIIIMSIFYNYDGILDVISGIINNKCPINQIIQSKNYDDFKKKLYDYRCNNIKNSPIDNINQKIITDNIFGFNRISTEKDLFIDNHSKGTISDSIYRHIDKQYFDKEIDIINEPKKSRELEYPKKIIIENKDILSMSNENMDSNTNITFTFVLDLIMKFYSEHNINIAVRFIEFYNLQRAYCLLLGVLHKSNYSSYRLYHIISKSIMNWSNFQSLFNVKNTYYLLTVYQREKTVYNKLLKQLID.

This is an uncharacterized protein from Acanthamoeba polyphaga (Amoeba).